The primary structure comprises 218 residues: Small ribosomal subunit protein uS3c (218 aa).

Residues 47 to 118 (VQKQIKNSSN…KIQITLKNVL (72 aa)) enclose the KH type-2 domain.

It belongs to the universal ribosomal protein uS3 family. In terms of assembly, part of the 30S ribosomal subunit.

The protein resides in the plastid. It localises to the chloroplast. The sequence is that of Small ribosomal subunit protein uS3c (rps3) from Angiopteris evecta (Mule's foot fern).